A 941-amino-acid polypeptide reads, in one-letter code: Coiled-coil domain-containing protein 39 (941 aa).

Coiled coils occupy residues 16 to 122 (AIPV…ENGI), 164 to 273 (AQQD…ESEI), 306 to 605 (QLKG…EIKV), and 665 to 825 (IKAA…EEQD). Residues 868 to 941 (PTASTKGSRQ…SNVKSKKSSK (74 aa)) are disordered. 2 stretches are compositionally biased toward low complexity: residues 871-903 (STKG…SQSS) and 914-934 (SSSL…SSNV). 2 positions are modified to phosphoserine: Ser892 and Ser900.

The protein belongs to the CCDC39 family. As to expression, mainly expressed in nasal brushings and, to a lesser extent, in lungs and testis.

The protein resides in the cytoplasm. It localises to the cytoskeleton. The protein localises to the cilium axoneme. In terms of biological role, required for assembly of dynein regulatory complex (DRC) and inner dynein arm (IDA) complexes, which are responsible for ciliary beat regulation, thereby playing a central role in motility in cilia and flagella. Probably acts together with CCDC40 to form a molecular ruler that determines the 96 nanometer (nm) repeat length and arrangements of components in cilia and flagella. Not required for outer dynein arm complexes assembly. This is Coiled-coil domain-containing protein 39 from Homo sapiens (Human).